A 389-amino-acid polypeptide reads, in one-letter code: Succinate--CoA ligase [ADP-forming] subunit beta (389 aa).

Positions 9–244 (KQLLAEYGIP…KTQEDPTEVI (236 aa)) constitute an ATP-grasp domain. Residues Lys-46, 53–55 (GRG), Gly-102, and Glu-107 each bind ATP. Mg(2+) contacts are provided by Asn-199 and Asp-213. Substrate contacts are provided by residues Asn-264 and 321 to 323 (GIV).

Belongs to the succinate/malate CoA ligase beta subunit family. In terms of assembly, heterotetramer of two alpha and two beta subunits. Mg(2+) is required as a cofactor.

It catalyses the reaction succinate + ATP + CoA = succinyl-CoA + ADP + phosphate. It carries out the reaction GTP + succinate + CoA = succinyl-CoA + GDP + phosphate. Its pathway is carbohydrate metabolism; tricarboxylic acid cycle; succinate from succinyl-CoA (ligase route): step 1/1. In terms of biological role, succinyl-CoA synthetase functions in the citric acid cycle (TCA), coupling the hydrolysis of succinyl-CoA to the synthesis of either ATP or GTP and thus represents the only step of substrate-level phosphorylation in the TCA. The beta subunit provides nucleotide specificity of the enzyme and binds the substrate succinate, while the binding sites for coenzyme A and phosphate are found in the alpha subunit. This chain is Succinate--CoA ligase [ADP-forming] subunit beta, found in Stenotrophomonas maltophilia (strain R551-3).